Consider the following 283-residue polypeptide: MNGGEKLESIPIDLIIEIHSRLPAESVARFRCVSKLWGSMFRRPYFTELFLTRSRARPRLLFVLQHNRKWSFSVFSSPQNQNIYEKPSFVVADFHMKFSVSTFPDFHSCSGLIHFSMMKGAYTVPVVCNPRTGQYAVLPKLTRTRYENSYSFVGYDPIEKQIKVLFMSDPDSGDDHRILTLGTTEKMLGRKIECSLTHNILSNEGVCINGVLYYKASRIVESSSDDDTSDDDDDDHERSDVIVCFDFRCEKFEFIVICFYGQLINSVQLSLKQKSHQKLDLII.

Residues 4–53 (GEKLESIPIDLIIEIHSRLPAESVARFRCVSKLWGSMFRRPYFTELFLTR) form the F-box domain.

In Arabidopsis thaliana (Mouse-ear cress), this protein is Putative F-box protein At1g60370.